The sequence spans 544 residues: MAKDIKFSEEARRSMLRGVDTLANAVKVTLGPKGRNVVLEKKFGSPLITNDGVTIAKEIELEDAFENMGAKLVAEVASKTNDVAGDGTTTATVLAQAMIREGLKNVTAGANPMGLRKGIEKAVTAAIEELKAISKPIEGKSSIAQVAAISSADEEVGQLIAEAMERVGNDGVITLEESKGFTTELDVVEGMQFDRGYASPYMITDSDKMEAVLDNPYILITDKKISNIQEILPVLEQVVQQGKPLLIIAEDVEGEALATLVVNKLRGTFNVVAVKAPGFGDRRKAMLEDIAILTGGEVITEELGRDLKSATVESLGRAGKIVVTKENTTVVEGIGNSQQIEARIGQIRAQLEETTSEFDREKLQERLAKLAGGVAVIKVGAATETELKERKLRIEDALNSTRAAVEEGIVAGGGTSLMNVYTKVASIVAEGDEATGINIVLRALEEPVRQIAINAGLEGSVVVERLKGEKVGVGFNAATGEWVNMLESGIVDPAKVTRSALQNAASVAAMFLTTEAVVADKPEPNAPAMPDMGGMGMGGMGGMM.

ATP is bound by residues 29-32 (TLGP), 86-90 (DGTTT), glycine 413, 476-478 (NAA), and aspartate 492.

Belongs to the chaperonin (HSP60) family. As to quaternary structure, forms a cylinder of 14 subunits composed of two heptameric rings stacked back-to-back. Interacts with the co-chaperonin GroES.

The protein localises to the cytoplasm. It catalyses the reaction ATP + H2O + a folded polypeptide = ADP + phosphate + an unfolded polypeptide.. Its function is as follows. Together with its co-chaperonin GroES, plays an essential role in assisting protein folding. The GroEL-GroES system forms a nano-cage that allows encapsulation of the non-native substrate proteins and provides a physical environment optimized to promote and accelerate protein folding. The chain is Chaperonin GroEL from Bacillus mycoides (strain KBAB4) (Bacillus weihenstephanensis).